We begin with the raw amino-acid sequence, 213 residues long: Large ribosomal subunit protein uL1 (213 aa).

This sequence belongs to the universal ribosomal protein uL1 family. As to quaternary structure, part of the 50S ribosomal subunit.

Its function is as follows. Binds directly to 23S rRNA. Probably involved in E site tRNA release. Protein L1 is also a translational repressor protein, it controls the translation of its operon by binding to its mRNA. In Methanococcus maripaludis (strain C6 / ATCC BAA-1332), this protein is Large ribosomal subunit protein uL1.